Here is a 230-residue protein sequence, read N- to C-terminus: Ribosomal RNA small subunit methyltransferase G (230 aa).

S-adenosyl-L-methionine contacts are provided by residues glycine 80, phenylalanine 85, 131–132 (VE), and arginine 145.

Belongs to the methyltransferase superfamily. RNA methyltransferase RsmG family.

It localises to the cytoplasm. It carries out the reaction guanosine(527) in 16S rRNA + S-adenosyl-L-methionine = N(7)-methylguanosine(527) in 16S rRNA + S-adenosyl-L-homocysteine. Specifically methylates the N7 position of guanine in position 527 of 16S rRNA. The sequence is that of Ribosomal RNA small subunit methyltransferase G from Novosphingobium aromaticivorans (strain ATCC 700278 / DSM 12444 / CCUG 56034 / CIP 105152 / NBRC 16084 / F199).